Reading from the N-terminus, the 597-residue chain is MNVGVKVREISTGSIGVIEKGNNQNGFFVNFGSRKNWKRNNEVEVIQNTIDNSNGKQSTTPKPIAQQQQQQQPPPQQSQQQPPQPLKPIPATRPVPTIPKVQSEDPGPRFGNFTLPTTNSSTKYSTLPSRQFFEVSSSPGDENGTFKRSAAPPPPSSLSSNQNGSNLNKVQSPSRPSIPSFEPPTQQPTQPLQKSPRNVPIVPKRTNPSPPSPPLQSPQPTPQQQPPPLKPIPQPQQQQQQQQQQQQQQQQQQQQQQQQQQQQQQPPPLKPIPQPQQSQPTQPIKSQIQIPITNTNGNTNGHSSLVEKSPRNNESTATTATTKDMWNIDYKELKFVGNEIGSGKYGSVSLGYWLGTPVAIKKLHENNEETEILVQRELQILKEIRHPQIVQFLGVSRNEKDEIHIITEFMDGGDLFDALIFGDIPLTWKEKLRISLDIAQSCRFLHARGILHRDLKSQNILLSTNRRAKLCDLGLARMFEERINKRYTCVGTEIWMAPEVCLDQSYSTAVDVFSFGIVLVEIITEKIPDERFPQHRFQFDAPAFLKKVPKECPPDFSKLCVDCTKYNPKERPSFIKVLDTIQNIYDSLPDDDEENYD.

The segment covering 49–61 (TIDNSNGKQSTTP) has biased composition (polar residues). Residues 49 to 320 (TIDNSNGKQS…RNNESTATTA (272 aa)) are disordered. Residues 72–97 (QPPPQQSQQQPPQPLKPIPATRPVPT) show a composition bias toward pro residues. Residues 114 to 140 (TLPTTNSSTKYSTLPSRQFFEVSSSPG) show a composition bias toward polar residues. The span at 157–168 (SLSSNQNGSNLN) shows a compositional bias: low complexity. Pro residues predominate over residues 208 to 234 (PSPPSPPLQSPQPTPQQQPPPLKPIPQ). Residues 235-264 (PQQQQQQQQQQQQQQQQQQQQQQQQQQQQQ) are compositionally biased toward low complexity. Pro residues predominate over residues 265-274 (QPPPLKPIPQ). Residues 275 to 301 (PQQSQPTQPIKSQIQIPITNTNGNTNG) are compositionally biased toward low complexity. The Protein kinase domain occupies 334–585 (KFVGNEIGSG…KVLDTIQNIY (252 aa)). Residues 340–348 (IGSGKYGSV) and lysine 361 contribute to the ATP site. Aspartate 454 (proton acceptor) is an active-site residue.

The protein belongs to the protein kinase superfamily. TKL Ser/Thr protein kinase family.

It carries out the reaction L-seryl-[protein] + ATP = O-phospho-L-seryl-[protein] + ADP + H(+). The enzyme catalyses L-threonyl-[protein] + ATP = O-phospho-L-threonyl-[protein] + ADP + H(+). The protein is Probable serine/threonine-protein kinase DDB_G0281745 of Dictyostelium discoideum (Social amoeba).